The chain runs to 4563 residues: Apolipoprotein B-100 (4563 aa).

An N-terminal signal peptide occupies residues 1 to 27 (MDPPRPALLALLALPALLLLLLAGARA). The tract at residues 32-126 (LENVSLVCPK…KNSEEFAAAM (95 aa)) is heparin-binding. Residue Asn-34 is glycosylated (N-linked (GlcNAc...) asparagine). Intrachain disulfides connect Cys-39-Cys-88 and Cys-78-Cys-97. One can recognise a Vitellogenin domain in the interval 46 to 672 (FKHLRKYTYN…PNNYLPKESM (627 aa)). Residue Asn-185 is glycosylated (N-linked (GlcNAc...) asparagine). Disulfide bonds link Cys-186/Cys-212, Cys-245/Cys-261, Cys-385/Cys-390, and Cys-478/Cys-513. Positions 232 to 306 (TRPLSTLISS…RFFGEGTKKM (75 aa)) are heparin-binding. Residues 902 to 959 (NTNFFHESGLEAHVALKAGKLKFIIPSPKRPVKLLSGGNTLHLVSTTKTEVIPPLIEN) form a heparin-binding region. Cys-966 and Cys-976 are oxidised to a cystine. N-linked (GlcNAc...) asparagine glycosylation occurs at Asn-983. Cys-1112 carries S-palmitoyl cysteine lipidation. N-linked (GlcNAc...) asparagine glycans are attached at residues Asn-1368, Asn-1377, and Asn-1523. Lys-2004 is modified (N6-acetyllysine). The heparin-binding stretch occupies residues 2043-2178 (RDAVEKPQEF…EKLSQLQTYM (136 aa)). 5 N-linked (GlcNAc...) asparagine glycosylation sites follow: Asn-2239, Asn-2560, Asn-2779, Asn-2982, and Asn-3101. Residues 3161–3236 (FLKTTKQSFD…KIKFDKYKAE (76 aa)) form a heparin-binding region. A basic (possible receptor binding region) region spans residues 3174-3184 (KAQYKKNKHRH). A disulfide bridge links Cys-3194 with Cys-3324. N-linked (GlcNAc...) asparagine glycosylation is present at Asn-3224. The residue at position 3279 (Ser-3279) is a Phosphoserine. N-linked (GlcNAc...) asparagine glycosylation is found at Asn-3336 and Asn-3358. An LDL receptor binding region spans residues 3373-3393 (VIDALQYKLEGTTRLTRKRGL). Residues 3383–3516 (GTTRLTRKRG…REYSGTIASE (134 aa)) are heparin-binding. The basic (possible receptor binding region) stretch occupies residues 3386–3394 (RLTRKRGLK). Asn-3411, Asn-3465, and Asn-3895 each carry an N-linked (GlcNAc...) asparagine glycan. Ser-4048 is modified (phosphoserine; by FAM20C). Thr-4052 is subject to Phosphothreonine. Asn-4237 and Asn-4431 each carry an N-linked (GlcNAc...) asparagine glycan.

In terms of assembly, interacts with PCSK9. Interacts with MTTP. Interacts with AUP1. Interacts with CIDEB. Post-translationally, palmitoylated; structural requirement for proper assembly of the hydrophobic core of the lipoprotein particle.

The protein resides in the cytoplasm. The protein localises to the secreted. It is found in the lipid droplet. In terms of biological role, apolipoprotein B is a major protein constituent of chylomicrons (apo B-48), LDL (apo B-100) and VLDL (apo B-100). Apo B-100 functions as a recognition signal for the cellular binding and internalization of LDL particles by the apoB/E receptor. The sequence is that of Apolipoprotein B-100 (APOB) from Homo sapiens (Human).